Consider the following 204-residue polypeptide: GTP cyclohydrolase 1 (204 aa).

Residues Cys92, His95, and Cys165 each coordinate Zn(2+).

This sequence belongs to the GTP cyclohydrolase I family. In terms of assembly, homomer.

The enzyme catalyses GTP + H2O = 7,8-dihydroneopterin 3'-triphosphate + formate + H(+). The protein operates within cofactor biosynthesis; 7,8-dihydroneopterin triphosphate biosynthesis; 7,8-dihydroneopterin triphosphate from GTP: step 1/1. This Mycobacterium avium (strain 104) protein is GTP cyclohydrolase 1.